A 141-amino-acid polypeptide reads, in one-letter code: Nucleoside diphosphate kinase (141 aa).

ATP-binding residues include Lys11, Phe59, Arg87, Thr93, Arg104, and Asn114. Residue His117 is the Pros-phosphohistidine intermediate of the active site.

Belongs to the NDK family. As to quaternary structure, homotetramer. Mg(2+) serves as cofactor.

Its subcellular location is the cytoplasm. The catalysed reaction is a 2'-deoxyribonucleoside 5'-diphosphate + ATP = a 2'-deoxyribonucleoside 5'-triphosphate + ADP. It carries out the reaction a ribonucleoside 5'-diphosphate + ATP = a ribonucleoside 5'-triphosphate + ADP. Major role in the synthesis of nucleoside triphosphates other than ATP. The ATP gamma phosphate is transferred to the NDP beta phosphate via a ping-pong mechanism, using a phosphorylated active-site intermediate. The protein is Nucleoside diphosphate kinase of Nitrosospira multiformis (strain ATCC 25196 / NCIMB 11849 / C 71).